Consider the following 63-residue polypeptide: Large ribosomal subunit protein bL28 (63 aa).

The protein belongs to the bacterial ribosomal protein bL28 family.

The protein is Large ribosomal subunit protein bL28 of Pelobacter propionicus (strain DSM 2379 / NBRC 103807 / OttBd1).